Reading from the N-terminus, the 194-residue chain is MNPIAQSKDSSREKLLSLLASNAYRHGTFTLSSGKKSNHYVNCKPVTLSGFGLVLLSDLFLPHVEEDSIAVAGLTLGADPLVSGLAMAAAQQERTLNALIVRKEPKGHGTEAWIEGPLPPKGSVITVLEDVVTTGGSSLKAVSQISKAGYKVNRILAIVDRQEGAAMEIQKSGLLLISLFNLDELVQRAKDISS.

5-phospho-alpha-D-ribose 1-diphosphate is bound by residues Arg-102, Lys-103, Lys-106, His-108, and 129 to 137; that span reads EDVVTTGGS. Positions 133 and 161 each coordinate orotate.

It belongs to the purine/pyrimidine phosphoribosyltransferase family. PyrE subfamily. As to quaternary structure, homodimer. It depends on Mg(2+) as a cofactor.

It carries out the reaction orotidine 5'-phosphate + diphosphate = orotate + 5-phospho-alpha-D-ribose 1-diphosphate. Its pathway is pyrimidine metabolism; UMP biosynthesis via de novo pathway; UMP from orotate: step 1/2. Its function is as follows. Catalyzes the transfer of a ribosyl phosphate group from 5-phosphoribose 1-diphosphate to orotate, leading to the formation of orotidine monophosphate (OMP). The polypeptide is Orotate phosphoribosyltransferase (Prochlorococcus marinus (strain MIT 9211)).